The chain runs to 496 residues: NADH-quinone oxidoreductase subunit N (496 aa).

13 helical membrane-spanning segments follow: residues 16–36 (SLSPMLSMMVFALFILIVGAI), 46–66 (CVFCIIAIFVNLGITLDFNGL), 79–99 (ISIISQIIILIASALFIPLAL), 116–136 (FLFMIAGFLFMVSSNNLLIIF), 166–186 (FAMGSLSAGFFAMAIAMFYLA), 208–228 (LIILLGCVFIASAIGFKLSLI), 245–267 (LAGYMSIVPKVAGFIVALRIFAM), 278–298 (DMLYIIAVLTMSLANIMALVQ), 304–324 (MLAFSSIAHAGVVLCALVANS), 331–351 (LFFYWIMFLFANLGAFSMLWV), 382–402 (AVIMGIFMIALAGIPPFSVFW), 422–442 (IIMINSAIAIYYYLKLIVFMF), and 464–484 (VIVGVAVAGTVFAFLFSGAIL).

The protein belongs to the complex I subunit 2 family. NDH-1 is composed of 14 different subunits. Subunits NuoA, H, J, K, L, M, N constitute the membrane sector of the complex.

It is found in the cell inner membrane. The enzyme catalyses a quinone + NADH + 5 H(+)(in) = a quinol + NAD(+) + 4 H(+)(out). Functionally, NDH-1 shuttles electrons from NADH, via FMN and iron-sulfur (Fe-S) centers, to quinones in the respiratory chain. The immediate electron acceptor for the enzyme in this species is believed to be ubiquinone. Couples the redox reaction to proton translocation (for every two electrons transferred, four hydrogen ions are translocated across the cytoplasmic membrane), and thus conserves the redox energy in a proton gradient. The polypeptide is NADH-quinone oxidoreductase subunit N (Campylobacter concisus (strain 13826)).